Reading from the N-terminus, the 263-residue chain is MQGRTPLLETLRELECEIRLLTVYARECCGCYEILRRKLDRLSGLIGEDCSRAQWQADSDDPALQALGLRLRDAAVQALCELEKHLCQGVLHEPGEMGRYLGSLLESIRGELDSAGIDADARVLFVGSGALPTSALVLAREVGAHLCCLDIDEEALGYAREIARCQGLEARMQFSSLPPAELAFSRDATHFLIASLVQQKSAVLAQIRQVMRADAKVLLRHGSGIKGLFNYPVEPAELEGWQVCAERVSQPLYDTLILEKAGR.

The protein belongs to the methyltransferase superfamily. CntL family. In terms of assembly, interacts with CntM.

The catalysed reaction is L-histidine + S-adenosyl-L-methionine = (2S)-2-amino-4-{[(1S)-1-carboxy-2-(1H-imidazol-4-yl)ethyl]amino}butanoate + S-methyl-5'-thioadenosine + H(+). Catalyzes the nucleophilic attack of one alpha-aminobutanoate moiety from SAM onto L-histidine to produce the intermediate (2S)-2-amino-4-{[(1S)-1-carboxy-2-(1H-imidazol-4-yl)ethyl]amino}butanoate. Functions in the biosynthesis of the metallophore pseudopaline, which is involved in the acquisition of nickel and zinc, and thus enables bacterial growth inside the host, where metal access is limited. Therefore, this enzyme probably contributes to Pseudomonas virulence. Cannot use D-histidine in place of L-histidine as substrate. The polypeptide is L-histidine 2-aminobutanoyltransferase (Pseudomonas aeruginosa (strain UCBPP-PA14)).